The following is a 489-amino-acid chain: MEKSWFNLMFSKGELEYRGELSKAMDSFAPIEKTTISKDRFIYDMDKNFYGWGERSSYYNNVDLLVNSKDIRNFISDDTFFVRDSNKNSYSIYFDIEKKKFEINNDLSDLEIFFYSYCSSSYLNNRSKGDNDLHYDPYIKDTKYNCNNHINSCIDSYFRSHICINSHFLSDSNNSNESYIYNFICSESGSGKIRESKNDKIRTNSNRNNLMSSKDFDITKNYNQLWIQCDNCYGLKYKKVEMNVCEECGHYLKMTSSERIELLIDPGSWNGMDEDMVSADPIKFHSREEPYKKRIASAQKKTGLTDAIQTGTGQLNGIPVALGVMDFQFMGGSMGSVVGDKITRLIEYATNQCLPLILVCSSGGARMQEGSLSLMQMAKISSVLCDYQSSKKLFYISILTSPTTGGVTASLGMLGDIIIAEPYAYIAFAGKRVIEQTLKKAVPEGSQAAESLLRKGLLDAIVPRNPLKGVVSELFQLHAFFPLNKNEIK.

The CoA carboxyltransferase N-terminal domain occupies 225–489; sequence LWIQCDNCYG…FFPLNKNEIK (265 aa). 4 residues coordinate Zn(2+): C229, C232, C245, and C248. The C4-type zinc-finger motif lies at 229–248; sequence CDNCYGLKYKKVEMNVCEEC.

The protein belongs to the AccD/PCCB family. In terms of assembly, acetyl-CoA carboxylase is a heterohexamer composed of biotin carboxyl carrier protein, biotin carboxylase and 2 subunits each of ACCase subunit alpha and ACCase plastid-coded subunit beta (accD). Zn(2+) is required as a cofactor.

It is found in the plastid. The protein localises to the chloroplast stroma. The enzyme catalyses N(6)-carboxybiotinyl-L-lysyl-[protein] + acetyl-CoA = N(6)-biotinyl-L-lysyl-[protein] + malonyl-CoA. The protein operates within lipid metabolism; malonyl-CoA biosynthesis; malonyl-CoA from acetyl-CoA: step 1/1. In terms of biological role, component of the acetyl coenzyme A carboxylase (ACC) complex. Biotin carboxylase (BC) catalyzes the carboxylation of biotin on its carrier protein (BCCP) and then the CO(2) group is transferred by the transcarboxylase to acetyl-CoA to form malonyl-CoA. The sequence is that of Acetyl-coenzyme A carboxylase carboxyl transferase subunit beta, chloroplastic from Brassica napus (Rape).